The following is a 380-amino-acid chain: GDSL esterase/lipase At3g26430 (380 aa).

The N-terminal stretch at 1 to 25 is a signal peptide; it reads METNLLLVKCVLLASCLIHPRACSP. The active-site Nucleophile is the Ser-38. Asn-97, Asn-115, and Asn-183 each carry an N-linked (GlcNAc...) asparagine glycan. Active-site residues include Asp-346 and His-349.

Belongs to the 'GDSL' lipolytic enzyme family.

The protein resides in the secreted. The catalysed reaction is hexadecanoate ester + H2O = an aliphatic alcohol + hexadecanoate + H(+). The enzyme catalyses a butanoate ester + H2O = an aliphatic alcohol + butanoate + H(+). Lipase activity is inhibited by phenylmethylsulfonyl fluoride (PMSF), but not neostigmine bromide (NB). Lipase that can hydrolyze p-nitrophenyl butyrate and p-nitrophenyl palmitate in vitro. Possesses low activity against p-nitrophenyl acetate. Substrate preference is p-nitrophenyl palmitate &gt; p-nitrophenyl butyrate &gt;&gt; p-nitrophenyl acetate. Lacks cholinesterase activity. The polypeptide is GDSL esterase/lipase At3g26430 (Arabidopsis thaliana (Mouse-ear cress)).